We begin with the raw amino-acid sequence, 308 residues long: Eukaryotic translation initiation factor 3 subunit G (308 aa).

The tract at residues 1–23 (MAPVAAPSTSQPAGGKPMNWADE) is disordered. Positions 225-303 (PTLRVTNLSE…LILSCQWSLP (79 aa)) constitute an RRM domain.

Belongs to the eIF-3 subunit G family. As to quaternary structure, component of the eukaryotic translation initiation factor 3 (eIF-3) complex.

The protein localises to the cytoplasm. In terms of biological role, RNA-binding component of the eukaryotic translation initiation factor 3 (eIF-3) complex, which is involved in protein synthesis of a specialized repertoire of mRNAs and, together with other initiation factors, stimulates binding of mRNA and methionyl-tRNAi to the 40S ribosome. The eIF-3 complex specifically targets and initiates translation of a subset of mRNAs involved in cell proliferation. This subunit can bind 18S rRNA. In Mycosarcoma maydis (Corn smut fungus), this protein is Eukaryotic translation initiation factor 3 subunit G.